Reading from the N-terminus, the 228-residue chain is MTISKWPACERPREKLLESGAAALSDAELLAVLLRVGAAGKSAVDLARELLHRFGSLTALFAAQGQALAGVRGMGAAKFAQVQAIPELARRALAESLRLPSGFDSPDSVRSYLRLTLAPLQHEVFMCLFLDPGNRMVASEELFRGTLTRTSVYPREVARQALAHNAAGIIVAHNHPRGTTAPSQSDIHLTRELARTLDLIDVRLLDHFIVAGHEIRSLAESCERLPGL.

The region spanning 102–224 is the MPN domain; it reads GFDSPDSVRS…IRSLAESCER (123 aa). Zn(2+) contacts are provided by H173, H175, and D186. The short motif at 173–186 is the JAMM motif element; sequence HNHPRGTTAPSQSD.

Belongs to the UPF0758 family.

This chain is UPF0758 protein RALTA_A2508, found in Cupriavidus taiwanensis (strain DSM 17343 / BCRC 17206 / CCUG 44338 / CIP 107171 / LMG 19424 / R1) (Ralstonia taiwanensis (strain LMG 19424)).